We begin with the raw amino-acid sequence, 141 residues long: Calcium-binding protein SPEC 2D (141 aa).

4 EF-hand domains span residues 10–42 (DQIK…MKSV), 43–72 (GHVL…AMIL), 73–107 (DKKC…FDRQ), and 108–141 (ITED…MNFC). Ca(2+) is bound by residues aspartate 23, asparagine 25, aspartate 27, and asparagine 29. Ca(2+) contacts are provided by aspartate 84, aspartate 86, lysine 90, aspartate 95, aspartate 121, aspartate 125, lysine 127, and glutamate 132.

Found in cell lineages giving rise to the aboral ectoderm, a squamous epithelium covering the surface of the late stage embryo and larva.

In terms of biological role, calcium-binding protein involved in larval development and metamorphosis. Likely to function as calcium buffers mediating the transport of calcium from the sea water to the blastocoel where calcium is required for skeleton formation. This is Calcium-binding protein SPEC 2D (SPEC2D) from Strongylocentrotus purpuratus (Purple sea urchin).